The sequence spans 357 residues: Peptide chain release factor 1 (357 aa).

Glutamine 234 is modified (N5-methylglutamine).

The protein belongs to the prokaryotic/mitochondrial release factor family. Post-translationally, methylated by PrmC. Methylation increases the termination efficiency of RF1.

The protein resides in the cytoplasm. In terms of biological role, peptide chain release factor 1 directs the termination of translation in response to the peptide chain termination codons UAG and UAA. The sequence is that of Peptide chain release factor 1 from Frankia casuarinae (strain DSM 45818 / CECT 9043 / HFP020203 / CcI3).